The chain runs to 262 residues: Transcription factor Spi-B (262 aa).

The tract at residues 1–31 (MLALEAAQLDGPHFSCLYPDGVFYDLDSCKH) is TAD1 (Acidic). A TAD2 region spans residues 41–61 (PDSLWDWTVAPPVPATPYEAF). The segment at 140–163 (ALEVSDSESDEALVAGPEGKGSEA) is disordered. A DNA-binding region (ETS) is located at residues 169-252 (LRLYQFLLGL…VKRKLTYQFD (84 aa)).

This sequence belongs to the ETS family. As to quaternary structure, can form homotypic interactions. Interacts with IRF4/Pip. Interacts with JUN. Interacts with TBP. May also interact with CREBBP and EP300. Interacts with NONO/p54(nrb). Expressed in plasmacytoid dendritic cells (pDCs) and B-cells, not expressed in T-cells or granulocytes. May also be enriched in stem cell populations of the liver.

The protein resides in the nucleus. Its subcellular location is the cytoplasm. Its function is as follows. Sequence specific transcriptional activator which binds to the PU-box, a purine-rich DNA sequence (5'-GAGGAA-3') that can act as a lymphoid-specific enhancer. Promotes development of plasmacytoid dendritic cells (pDCs), also known as type 2 DC precursors (pre-DC2) or natural interferon (IFN)-producing cells. These cells have the capacity to produce large amounts of interferon and block viral replication. May be required for B-cell receptor (BCR) signaling, which is necessary for normal B-cell development and antigenic stimulation. The sequence is that of Transcription factor Spi-B (SPIB) from Homo sapiens (Human).